Reading from the N-terminus, the 593-residue chain is Chaperone protein DnaK (593 aa).

T181 carries the phosphothreonine; by autocatalysis modification.

The protein belongs to the heat shock protein 70 family.

Functionally, acts as a chaperone. The sequence is that of Chaperone protein DnaK from Mycoplasmoides gallisepticum (strain R(low / passage 15 / clone 2)) (Mycoplasma gallisepticum).